The primary structure comprises 544 residues: Light-independent protochlorophyllide reductase subunit B (544 aa).

Asp36 is a binding site for [4Fe-4S] cluster. Residue Asp286 is the Proton donor of the active site. Residue 421-422 participates in substrate binding; the sequence is GM.

Belongs to the ChlB/BchB/BchZ family. As to quaternary structure, protochlorophyllide reductase is composed of three subunits; BchL, BchN and BchB. Forms a heterotetramer of two BchB and two BchN subunits. [4Fe-4S] cluster serves as cofactor.

It catalyses the reaction chlorophyllide a + oxidized 2[4Fe-4S]-[ferredoxin] + 2 ADP + 2 phosphate = protochlorophyllide a + reduced 2[4Fe-4S]-[ferredoxin] + 2 ATP + 2 H2O. It functions in the pathway porphyrin-containing compound metabolism; bacteriochlorophyll biosynthesis (light-independent). In terms of biological role, component of the dark-operative protochlorophyllide reductase (DPOR) that uses Mg-ATP and reduced ferredoxin to reduce ring D of protochlorophyllide (Pchlide) to form chlorophyllide a (Chlide). This reaction is light-independent. The NB-protein (BchN-BchB) is the catalytic component of the complex. The protein is Light-independent protochlorophyllide reductase subunit B of Chloroflexus aggregans (strain MD-66 / DSM 9485).